We begin with the raw amino-acid sequence, 64 residues long: DNA gyrase inhibitor YacG (64 aa).

The Zn(2+) site is built by C9, C12, C28, and C32. The disordered stretch occupies residues 45–64; that stretch reads KRIPSSGDLSESDDWSEEQK. Acidic residues predominate over residues 54–64; sequence SESDDWSEEQK.

Belongs to the DNA gyrase inhibitor YacG family. As to quaternary structure, interacts with GyrB. Zn(2+) is required as a cofactor.

In terms of biological role, inhibits all the catalytic activities of DNA gyrase by preventing its interaction with DNA. Acts by binding directly to the C-terminal domain of GyrB, which probably disrupts DNA binding by the gyrase. This chain is DNA gyrase inhibitor YacG, found in Citrobacter koseri (strain ATCC BAA-895 / CDC 4225-83 / SGSC4696).